The following is a 174-amino-acid chain: Endoribonuclease YbeY (174 aa).

Zn(2+)-binding residues include His124, His128, and His134.

This sequence belongs to the endoribonuclease YbeY family. Requires Zn(2+) as cofactor.

The protein localises to the cytoplasm. Single strand-specific metallo-endoribonuclease involved in late-stage 70S ribosome quality control and in maturation of the 3' terminus of the 16S rRNA. The polypeptide is Endoribonuclease YbeY (Synechococcus elongatus (strain ATCC 33912 / PCC 7942 / FACHB-805) (Anacystis nidulans R2)).